The following is a 75-amino-acid chain: SPbeta prophage-derived uncharacterized protein YorX (75 aa).

The protein is SPbeta prophage-derived uncharacterized protein YorX (yorX) of Bacillus subtilis (strain 168).